The sequence spans 184 residues: Large ribosomal subunit protein uL6 (184 aa).

Belongs to the universal ribosomal protein uL6 family. As to quaternary structure, part of the 50S ribosomal subunit.

Functionally, this protein binds to the 23S rRNA, and is important in its secondary structure. It is located near the subunit interface in the base of the L7/L12 stalk, and near the tRNA binding site of the peptidyltransferase center. In Thermosipho africanus (strain TCF52B), this protein is Large ribosomal subunit protein uL6.